A 485-amino-acid polypeptide reads, in one-letter code: Probable aspartic-type endopeptidase opsB (485 aa).

The signal sequence occupies residues 1–20; that stretch reads MRHIFSLLSIVCLMVKHGAC. The 329-residue stretch at 69–397 folds into the Peptidase A1 domain; the sequence is YFCNVTLGTP…DIANNEISIA (329 aa). A glycan (N-linked (GlcNAc...) asparagine) is linked at N72. D87 is a catalytic residue. 4 N-linked (GlcNAc...) asparagine glycosylation sites follow: N99, N107, N111, and N132. D285 is an active-site residue. N-linked (GlcNAc...) asparagine glycans are attached at residues N328, N337, and N402. S461 carries the GPI-anchor amidated serine lipid modification. Residues 462–485 constitute a propeptide, removed in mature form; that stretch reads AGVARADKQYLAIALIAVWFVLGL.

It belongs to the peptidase A1 family.

The protein resides in the cell membrane. Its function is as follows. Probable GPI-anchored aspartic-type endopeptidase which contributes to virulence. This Aspergillus fumigatus (strain ATCC MYA-4609 / CBS 101355 / FGSC A1100 / Af293) (Neosartorya fumigata) protein is Probable aspartic-type endopeptidase opsB (opsB).